Reading from the N-terminus, the 393-residue chain is PGA synthase CapB (393 aa).

The cofactor is Mn(2+).

In terms of biological role, catalyzes the biosynthesis of PGA (gamma-polyglutamic acid) from L-glutamate. Both the 44-kDa and the 33-kDa forms are required for PGA synthesis. The protein is PGA synthase CapB (capB) of Bacillus subtilis (strain 168).